The primary structure comprises 203 residues: Protein GrpE (203 aa).

The segment covering 1-10 (MSNESIKAEQ) has biased composition (basic and acidic residues). The disordered stretch occupies residues 1 to 20 (MSNESIKAEQDLIQEGVESE).

Belongs to the GrpE family. As to quaternary structure, homodimer.

Its subcellular location is the cytoplasm. Functionally, participates actively in the response to hyperosmotic and heat shock by preventing the aggregation of stress-denatured proteins, in association with DnaK and GrpE. It is the nucleotide exchange factor for DnaK and may function as a thermosensor. Unfolded proteins bind initially to DnaJ; upon interaction with the DnaJ-bound protein, DnaK hydrolyzes its bound ATP, resulting in the formation of a stable complex. GrpE releases ADP from DnaK; ATP binding to DnaK triggers the release of the substrate protein, thus completing the reaction cycle. Several rounds of ATP-dependent interactions between DnaJ, DnaK and GrpE are required for fully efficient folding. The protein is Protein GrpE of Shewanella sp. (strain MR-7).